The following is a 243-amino-acid chain: 1-(5-phosphoribosyl)-5-[(5-phosphoribosylamino)methylideneamino] imidazole-4-carboxamide isomerase (243 aa).

The active-site Proton acceptor is aspartate 8. Aspartate 130 functions as the Proton donor in the catalytic mechanism.

This sequence belongs to the HisA/HisF family.

The protein localises to the cytoplasm. The enzyme catalyses 1-(5-phospho-beta-D-ribosyl)-5-[(5-phospho-beta-D-ribosylamino)methylideneamino]imidazole-4-carboxamide = 5-[(5-phospho-1-deoxy-D-ribulos-1-ylimino)methylamino]-1-(5-phospho-beta-D-ribosyl)imidazole-4-carboxamide. The protein operates within amino-acid biosynthesis; L-histidine biosynthesis; L-histidine from 5-phospho-alpha-D-ribose 1-diphosphate: step 4/9. The chain is 1-(5-phosphoribosyl)-5-[(5-phosphoribosylamino)methylideneamino] imidazole-4-carboxamide isomerase from Ruthia magnifica subsp. Calyptogena magnifica.